The following is a 202-amino-acid chain: MAETAASRTGSVARKTNETSISVSVNLDGTGKSKISTGVGFFDHMLDQLSRHSLIDMEIEAKGDLHIDDHHTVEDTGIAIGQAISKALGDRRGITRYASIDLAMDETMTKAAVDLSGRPFLVWNVAFSAPKIGTFDTELVREFFQALAQNAGITLHLLNHYGANNHHIAETCFKAVARALRTATEIDPRQAGRVPSTKGTLV.

It belongs to the imidazoleglycerol-phosphate dehydratase family.

The protein localises to the cytoplasm. The catalysed reaction is D-erythro-1-(imidazol-4-yl)glycerol 3-phosphate = 3-(imidazol-4-yl)-2-oxopropyl phosphate + H2O. Its pathway is amino-acid biosynthesis; L-histidine biosynthesis; L-histidine from 5-phospho-alpha-D-ribose 1-diphosphate: step 6/9. In Rhizobium etli (strain ATCC 51251 / DSM 11541 / JCM 21823 / NBRC 15573 / CFN 42), this protein is Imidazoleglycerol-phosphate dehydratase.